A 311-amino-acid polypeptide reads, in one-letter code: Glutaminase (311 aa).

Residues Ser-66, Asn-116, Glu-162, Asn-169, Tyr-193, Tyr-245, and Val-263 each coordinate substrate.

This sequence belongs to the glutaminase family. Homotetramer.

It carries out the reaction L-glutamine + H2O = L-glutamate + NH4(+). The sequence is that of Glutaminase from Rhodopseudomonas palustris (strain BisB5).